We begin with the raw amino-acid sequence, 859 residues long: Cation/H(+) antiporter 24 (859 aa).

12 consecutive transmembrane segments (helical) span residues 64 to 84 (AFSTFLIEAIIIIFFIKVVSI), 92 to 112 (PRIVSEIIGGMMIGPSMFGGI), 122 to 142 (PIANYICANIGLMGFFYFLFL), 161 to 181 (YIAAIGVIVPIICVGSVGMAM), 194 to 214 (SIGGVVFALSFTSFPVIYTVL), 227 to 247 (FAMSVALLGDMAGVYVIVIFE), 258 to 278 (YSVFWFLVSVVIFAAFMLLVV), 291 to 311 (EGTLVNQNYIVMILMGVLASC), 312 to 332 (FLTDMFGLSIAVGPIWLGLLV), 348 to 368 (TFIYEFLMPFTYALVGQGTNI), 384 to 404 (FYMTVVGFITKFLSTAFAALF), and 438 to 458 (IVGFPGYTVMVLHTVVVTAVT). The interval 538–566 (IDHEQRKEEEEEEYEEEEEEPERKQSGRI) is disordered. Residues 546–557 (EEEEEYEEEEEE) are compositionally biased toward acidic residues. Serine 857 carries the phosphoserine modification.

Belongs to the monovalent cation:proton antiporter 2 (CPA2) transporter (TC 2.A.37) family. CHX (TC 2.A.37.4) subfamily. In terms of tissue distribution, specifically expressed in pollen.

It is found in the membrane. Its function is as follows. May operate as a cation/H(+) antiporter. This Arabidopsis thaliana (Mouse-ear cress) protein is Cation/H(+) antiporter 24 (CHX24).